The chain runs to 65 residues: Ubiquinol-cytochrome-c reductase complex assembly factor 6 (65 aa).

Residues 1-9 (MPAGVSWPR) lie on the Mitochondrial matrix side of the membrane. A helical; Signal-anchor for type II membrane protein membrane pass occupies residues 10–32 (YLRMFAASVLSMFAGAQVVHHYY). Topologically, residues 33-65 (RPDLSIPEIPPKPGELRTELLGLKERQMDSQKQ) are mitochondrial intermembrane.

It belongs to the UQCC6 family. In terms of tissue distribution, highly expressed in skeletal and cardiac muscle (at protein level).

The protein localises to the mitochondrion inner membrane. In terms of biological role, required for the assembly and stability of the mitochondrial ubiquinol-cytochrome c reductase complex (complex III (CIII) or cytochrome b-c1 complex), a multisubunit transmembrane complex that is part of the mitochondrial electron transport chain (ETC) which drives oxidative phosphorylation. Mediates early complex III biogenesis. Participates in regulating the levels of electron transport chain proteins, and therefore energy supply, in response to changes in energy demand. Also required for cytochrome c oxidase complex (complex IV) assembly. The chain is Ubiquinol-cytochrome-c reductase complex assembly factor 6 (uqcc6) from Danio rerio (Zebrafish).